We begin with the raw amino-acid sequence, 261 residues long: Methyl-coenzyme M reductase subunit gamma (261 aa).

Arg123 lines the coenzyme M pocket.

The protein belongs to the methyl-coenzyme M reductase gamma subunit family. MCR is a hexamer of two alpha, two beta, and two gamma chains, forming a dimer of heterotrimers. Coenzyme F430 serves as cofactor.

The protein localises to the cytoplasm. The enzyme catalyses coenzyme B + methyl-coenzyme M = methane + coenzyme M-coenzyme B heterodisulfide. It functions in the pathway one-carbon metabolism; methyl-coenzyme M reduction; methane from methyl-coenzyme M: step 1/1. Its function is as follows. Component of the methyl-coenzyme M reductase (MCR) I that catalyzes the reductive cleavage of methyl-coenzyme M (CoM-S-CH3 or 2-(methylthio)ethanesulfonate) using coenzyme B (CoB or 7-mercaptoheptanoylthreonine phosphate) as reductant which results in the production of methane and the mixed heterodisulfide of CoB and CoM (CoM-S-S-CoB). This is the final step in methanogenesis. The protein is Methyl-coenzyme M reductase subunit gamma (mcrG) of Methanococcus voltae.